The primary structure comprises 347 residues: Integrin beta-1-binding protein 2 (347 aa).

Residues C5, C10, C24, and H27 each coordinate Zn(2+). Residues 5–64 (CRNKGCGQHFDPNTNLPDSCCHHPGVPIFHDALKGWSCCRKRTVDFSEFLNIKGCTMGPH) form the CHORD 1 domain. The SH3-binding motif lies at 28–31 (PGVP). Residues C42, C43, C59, and H64 each contribute to the Zn(2+) site. The SH3-binding signature appears at 70–78 (PEAPQPEGP). Zn(2+) contacts are provided by C149 and C154. The 60-residue stretch at 149-208 (CQNPGCDAVYQGPESDATPCTYHPGAPRFHEGMKSWSCCGIQTLDFGAFLAQPGCRVGRH) folds into the CHORD 2 domain. The SH2-binding signature appears at 158-161 (YQGP). Residues C168 and H171 each contribute to the Zn(2+) site. The SH3-binding signature appears at 172 to 175 (PGAP). The Zn(2+) site is built by C186, C187, C203, and H208. Positions 215 to 304 (PASCRHDWHQ…ADPGSWAQLE (90 aa)) constitute a CS domain. The short motif at 234–237 (YGQI) is the SH2-binding element. Positions 319–347 (LEMDEEESDDSDDDLSWTEEEEEEEAMGE) are disordered. Over residues 320 to 347 (EMDEEESDDSDDDLSWTEEEEEEEAMGE) the composition is skewed to acidic residues.

Interacts with beta-1 integrin subunit. This interaction is regulated by divalent cations, and it occurs only in absence of calcium. Expressed in skeletal and cardiac muscles but not in other tissues.

Functionally, may play a role during maturation and/or organization of muscles cells. This Homo sapiens (Human) protein is Integrin beta-1-binding protein 2 (ITGB1BP2).